The chain runs to 454 residues: MGENDPPAVEAPFSFRSLFGLDDLKISPVAPDADAVAAQILSLLPLKFFPIIVIGIIALILALAIGLGIHFDCSGKYRCRSSFKCIELIARCDGVSDCKDGEDEYRCVRVGGQNAVLQVFTAASWKTMCSDDWKGHYANVACAQLGFPSYVSSDNLRVSSLEGQFREEFVSIDHLLPDDKVTALHHSVYVREGCASGHVVTLQCTACGHRRGYSSRIVGGNMSLLSQWPWQASLQFQGYHLCGGSVITPLWIITAAHCVYDLYLPKSWTIQVGLVSLLDNPAPSHLVEKIVYHSKYKPKRLGNDIALMKLAGPLTFNEMIQPVCLPNSEENFPDGKVCWTSGWGATEDGAGDASPVLNHAAVPLISNKICNHRDVYGGIISPSMLCAGYLTGGVDSCQGDSGGPLVCQERRLWKLVGATSFGIGCAEVNKPGVYTRVTSFLDWIHEQMERDLKT.

At 1–48 (MGENDPPAVEAPFSFRSLFGLDDLKISPVAPDADAVAAQILSLLPLKF) the chain is on the cytoplasmic side. Residues 49-69 (FPIIVIGIIALILALAIGLGI) form a helical; Signal-anchor for type II membrane protein membrane-spanning segment. The Extracellular portion of the chain corresponds to 70–454 (HFDCSGKYRC…HEQMERDLKT (385 aa)). An LDL-receptor class A domain is found at 72 to 108 (DCSGKYRCRSSFKCIELIARCDGVSDCKDGEDEYRCV). 10 disulfides stabilise this stretch: cysteine 73–cysteine 85, cysteine 79–cysteine 98, cysteine 92–cysteine 107, cysteine 129–cysteine 194, cysteine 142–cysteine 204, cysteine 207–cysteine 324, cysteine 242–cysteine 258, cysteine 338–cysteine 407, cysteine 370–cysteine 386, and cysteine 397–cysteine 425. In terms of domain architecture, SRCR spans 109-205 (RVGGQNAVLQ…SGHVVTLQCT (97 aa)). A Peptidase S1 domain is found at 217-449 (IVGGNMSLLS…FLDWIHEQME (233 aa)). N-linked (GlcNAc...) asparagine glycosylation is present at asparagine 221. Active-site charge relay system residues include histidine 257 and aspartate 304. Serine 401 functions as the Charge relay system in the catalytic mechanism.

Belongs to the peptidase S1 family. In terms of processing, undergoes autoproteolytic activation. Expressed in many tissues including fetal cochlea. Isoform T is found at increased levels in some carcinomas.

Its subcellular location is the endoplasmic reticulum membrane. Functionally, probable serine protease that plays a role in hearing. Acts as a permissive factor for cochlear hair cell survival and activation at the onset of hearing and is required for saccular hair cell survival. Activates ENaC (in vitro). The polypeptide is Transmembrane protease serine 3 (TMPRSS3) (Homo sapiens (Human)).